Here is a 130-residue protein sequence, read N- to C-terminus: Follitropin subunit beta (130 aa).

Residues 1-20 (MMKSIQLCILLWCLRAVCCH) form the signal peptide. 6 cysteine pairs are disulfide-bonded: cysteine 22/cysteine 70, cysteine 36/cysteine 85, cysteine 39/cysteine 123, cysteine 47/cysteine 101, cysteine 51/cysteine 103, and cysteine 106/cysteine 113. N-linked (GlcNAc...) asparagine glycosylation is found at asparagine 26 and asparagine 43.

Belongs to the glycoprotein hormones subunit beta family. In terms of assembly, heterodimer. The active follitropin is a heterodimer composed of an alpha chain/CGA shared with other hormones and a unique beta chain/FSHB shown here.

It is found in the secreted. In terms of biological role, together with the alpha chain CGA constitutes follitropin, the follicle-stimulating hormone, and provides its biological specificity to the hormone heterodimer. Binds FSHR, a G protein-coupled receptor, on target cells to activate downstream signaling pathways. Follitropin is involved in follicle development and spermatogenesis in reproductive organs. The polypeptide is Follitropin subunit beta (Fshb) (Rattus norvegicus (Rat)).